A 154-amino-acid chain; its full sequence is Endoribonuclease YbeY (154 aa).

3 residues coordinate Zn(2+): His113, His117, and His123.

It belongs to the endoribonuclease YbeY family. Zn(2+) is required as a cofactor.

The protein localises to the cytoplasm. Functionally, single strand-specific metallo-endoribonuclease involved in late-stage 70S ribosome quality control and in maturation of the 3' terminus of the 16S rRNA. The polypeptide is Endoribonuclease YbeY (Aeromonas salmonicida (strain A449)).